We begin with the raw amino-acid sequence, 236 residues long: Small ribosomal subunit protein uS2c (236 aa).

The protein belongs to the universal ribosomal protein uS2 family.

Its subcellular location is the plastid. The protein localises to the chloroplast. The protein is Small ribosomal subunit protein uS2c (rps2) of Draba nemorosa (Woodland whitlowgrass).